We begin with the raw amino-acid sequence, 705 residues long: Tyrosine decarboxylase (705 aa).

Over residues 22-32 (RIRNSLSPSRP) the composition is skewed to polar residues. Positions 22–81 (RIRNSLSPSRPSMSEATATGSSSSSRASTTIPSTPNMDVTPTVEDPRQNDNNASGMTRDE) are disordered. The segment covering 33–55 (SMSEATATGSSSSSRASTTIPST) has biased composition (low complexity). Position 380 is an N6-(pyridoxal phosphate)lysine (Lys380). Residues 554-620 (VKAVIAEEDE…AQKQHESLAK (67 aa)) adopt a coiled-coil conformation. A compositionally biased stretch (polar residues) spans 667–678 (HSQRPNRLSQSP). The segment at 667–687 (HSQRPNRLSQSPGSAGSAFFD) is disordered.

It belongs to the group II decarboxylase family. Pyridoxal 5'-phosphate is required as a cofactor. Expressed in the gonadal sheath projections in between the oocytes, in head RIM motor neurons and RIC interneurons.

Its subcellular location is the cytoplasm. It localises to the cell projection. It is found in the axon. The protein resides in the perikaryon. The enzyme catalyses L-tyrosine + H(+) = tyramine + CO2. Required for the decarboxylation of tyrosine to tyramine, a precursor of octopamine but probably also itself a neurotransmitter. Involved in the regulation of egg laying, which is inhibited by tyramine. Also involved in controlling locomotion and head movements. Due to its involvement in octopamine biosynthesis, also required for crtc-1-dependent regulation of AMPK-mediated longevity which requires octopamine signaling. The chain is Tyrosine decarboxylase from Caenorhabditis elegans.